The following is a 165-amino-acid chain: Phosphopantetheine adenylyltransferase (165 aa).

Thr-9 lines the substrate pocket. Residues 9–10 and His-17 each bind ATP; that span reads TF. The substrate site is built by Lys-41, Leu-73, and Arg-87. ATP-binding positions include 88–90, Glu-98, and 123–129; these read GLR and YQFISGT.

This sequence belongs to the bacterial CoaD family. As to quaternary structure, homohexamer. It depends on Mg(2+) as a cofactor.

It is found in the cytoplasm. The catalysed reaction is (R)-4'-phosphopantetheine + ATP + H(+) = 3'-dephospho-CoA + diphosphate. It functions in the pathway cofactor biosynthesis; coenzyme A biosynthesis; CoA from (R)-pantothenate: step 4/5. In terms of biological role, reversibly transfers an adenylyl group from ATP to 4'-phosphopantetheine, yielding dephospho-CoA (dPCoA) and pyrophosphate. The polypeptide is Phosphopantetheine adenylyltransferase (Burkholderia orbicola (strain MC0-3)).